The primary structure comprises 164 residues: MKTAVYPGSFDPITKGHLNIIKRASKVCDKLIVAVLVNPEKKGLFSVDERVEMIKRVTKNHSNVEVQCFSGLLIDFMKEKKSKVIIKGLRTMSDFEYEFKMALMNNKLDPNIETVFMMTNAKYSYLSSSSVKQVAMFGGCIKDLVPDEIIPDIKKKINHKKECI.

Residue serine 9 participates in substrate binding. ATP contacts are provided by residues 9 to 10 and histidine 17; that span reads SF. Residues lysine 41, leucine 73, and lysine 87 each contribute to the substrate site. ATP-binding positions include 88–90, glutamate 98, and 123–129; these read GLR and YSYLSSS.

It belongs to the bacterial CoaD family. In terms of assembly, homohexamer. Requires Mg(2+) as cofactor.

Its subcellular location is the cytoplasm. The enzyme catalyses (R)-4'-phosphopantetheine + ATP + H(+) = 3'-dephospho-CoA + diphosphate. It participates in cofactor biosynthesis; coenzyme A biosynthesis; CoA from (R)-pantothenate: step 4/5. Its function is as follows. Reversibly transfers an adenylyl group from ATP to 4'-phosphopantetheine, yielding dephospho-CoA (dPCoA) and pyrophosphate. In Clostridium botulinum (strain 657 / Type Ba4), this protein is Phosphopantetheine adenylyltransferase.